Consider the following 210-residue polypeptide: Type III pantothenate kinase (210 aa).

Position 5–12 (5–12 (DIGNTYLH)) interacts with ATP. Residues Tyr-69 and 73–76 (GVDR) each bind substrate. The active-site Proton acceptor is Asp-75. Asp-90 is a binding site for K(+). Ser-93 provides a ligand contact to ATP. Thr-145 contacts substrate.

Belongs to the type III pantothenate kinase family. Homodimer. It depends on NH4(+) as a cofactor. K(+) serves as cofactor.

It localises to the cytoplasm. It catalyses the reaction (R)-pantothenate + ATP = (R)-4'-phosphopantothenate + ADP + H(+). The protein operates within cofactor biosynthesis; coenzyme A biosynthesis; CoA from (R)-pantothenate: step 1/5. Catalyzes the phosphorylation of pantothenate (Pan), the first step in CoA biosynthesis. The protein is Type III pantothenate kinase of Wolinella succinogenes (strain ATCC 29543 / DSM 1740 / CCUG 13145 / JCM 31913 / LMG 7466 / NCTC 11488 / FDC 602W) (Vibrio succinogenes).